A 102-amino-acid chain; its full sequence is Small ribosomal subunit protein uS10 (102 aa).

It belongs to the universal ribosomal protein uS10 family. As to quaternary structure, part of the 30S ribosomal subunit.

Its function is as follows. Involved in the binding of tRNA to the ribosomes. This is Small ribosomal subunit protein uS10 from Pelagibacter ubique (strain HTCC1062).